The primary structure comprises 190 residues: Orotate phosphoribosyltransferase (190 aa).

Residue 114–122 (EDVITTGGS) participates in 5-phospho-alpha-D-ribose 1-diphosphate binding. Orotate is bound by residues Thr-118 and Arg-146.

It belongs to the purine/pyrimidine phosphoribosyltransferase family. PyrE subfamily. As to quaternary structure, homodimer. Mg(2+) serves as cofactor.

The enzyme catalyses orotidine 5'-phosphate + diphosphate = orotate + 5-phospho-alpha-D-ribose 1-diphosphate. The protein operates within pyrimidine metabolism; UMP biosynthesis via de novo pathway; UMP from orotate: step 1/2. Functionally, catalyzes the transfer of a ribosyl phosphate group from 5-phosphoribose 1-diphosphate to orotate, leading to the formation of orotidine monophosphate (OMP). This is Orotate phosphoribosyltransferase from Pelotomaculum thermopropionicum (strain DSM 13744 / JCM 10971 / SI).